Consider the following 521-residue polypeptide: GMP synthase [glutamine-hydrolyzing] (521 aa).

The 196-residue stretch at 8 to 203 folds into the Glutamine amidotransferase type-1 domain; the sequence is KILILDFGAQ…VVDVCGCQTL (196 aa). Residue Cys-85 is the Nucleophile of the active site. Residues His-177 and Glu-179 contribute to the active site. One can recognise a GMPS ATP-PPase domain in the interval 204-396; sequence WTAANIIDDQ…LGLPRTMVYR (193 aa). 231–237 serves as a coordination point for ATP; it reads SGGVDSS.

As to quaternary structure, homodimer.

It catalyses the reaction XMP + L-glutamine + ATP + H2O = GMP + L-glutamate + AMP + diphosphate + 2 H(+). It participates in purine metabolism; GMP biosynthesis; GMP from XMP (L-Gln route): step 1/1. Functionally, catalyzes the synthesis of GMP from XMP. The chain is GMP synthase [glutamine-hydrolyzing] from Stenotrophomonas maltophilia (strain R551-3).